A 502-amino-acid chain; its full sequence is Protein IWS1 homolog 1 (502 aa).

Residues 1 to 12 show a composition bias toward basic and acidic residues; that stretch reads MGFEDDPYRDVD. 2 disordered regions span residues 1-61 and 87-208; these read MGFE…DNDK and DEDV…DEDE. Composition is skewed to acidic residues over residues 13 to 22, 34 to 49, and 87 to 97; these read GEPIVDFDDF, QDFD…DWDG, and DEDVDDAEFDE. Basic and acidic residues-rich tracts occupy residues 138-151 and 181-194; these read NRGE…DEMW and PSER…DRSP. Tyr185 is modified (phosphotyrosine). Positions 287–370 constitute a TFIIS N-terminal domain; that stretch reads TLLKNWLEPL…DKWSRPIFNK (84 aa). A disordered region spans residues 385–434; the sequence is VPYRRPPVKKPSNKATMESRDGDFDLEIRERKTGLTSGQSSRGDRQMTMR. The segment covering 401–417 has biased composition (basic and acidic residues); the sequence is MESRDGDFDLEIRERKT.

This sequence belongs to the IWS1 family. Interacts with BZR2/BES1 and SPT6 (via N-terminus). Interacts with ASHH2/SDG8.

It is found in the nucleus. In terms of biological role, transcription factor involved in RNA polymerase II (RNAPII) transcription regulation. Involved in transcription elongation. May function at post-recruitment and elongation steps of transcription. May be recruited by BZR2/BES1 to target genes and promote their expression during transcription elongation process. Required for brassinosteroid (BR)-induced gene expression. Required the for regulation of numerous nitrogen-responsive genes in roots. Acts in roots to repress NRT2.1 transcription in response to high nitrogen supply. This repression is associated with an IWS1-dependent increase of trimethylation on 'Lys-27' H3K27me3 at the NRT2.1 locus. This chain is Protein IWS1 homolog 1, found in Arabidopsis thaliana (Mouse-ear cress).